The sequence spans 259 residues: UDP-2,3-diacylglucosamine hydrolase (259 aa).

Mn(2+)-binding residues include D8, H10, D41, N79, and H114. A substrate-binding site is contributed by 79 to 80; it reads NR. 5 residues coordinate substrate: D122, S160, N164, K167, and H195. Residues H195 and H197 each contribute to the Mn(2+) site.

Belongs to the LpxH family. It depends on Mn(2+) as a cofactor.

The protein localises to the cell inner membrane. It catalyses the reaction UDP-2-N,3-O-bis[(3R)-3-hydroxytetradecanoyl]-alpha-D-glucosamine + H2O = 2-N,3-O-bis[(3R)-3-hydroxytetradecanoyl]-alpha-D-glucosaminyl 1-phosphate + UMP + 2 H(+). It functions in the pathway glycolipid biosynthesis; lipid IV(A) biosynthesis; lipid IV(A) from (3R)-3-hydroxytetradecanoyl-[acyl-carrier-protein] and UDP-N-acetyl-alpha-D-glucosamine: step 4/6. Hydrolyzes the pyrophosphate bond of UDP-2,3-diacylglucosamine to yield 2,3-diacylglucosamine 1-phosphate (lipid X) and UMP by catalyzing the attack of water at the alpha-P atom. Involved in the biosynthesis of lipid A, a phosphorylated glycolipid that anchors the lipopolysaccharide to the outer membrane of the cell. The chain is UDP-2,3-diacylglucosamine hydrolase from Edwardsiella ictaluri (strain 93-146).